Reading from the N-terminus, the 346-residue chain is NADH-ubiquinone oxidoreductase chain 2 (346 aa).

11 helical membrane passes run 1–21 (MNPH…TITI), 25–45 (HWVL…PLIS), 60–80 (FLTQ…NAWA), 95–115 (CLLL…HFWF), 124–144 (LMTA…LLLM), 149–169 (LNPA…GWMG), 178–195 (ILAF…IILV), 200–219 (LALL…FMAL), 242–262 (ATLM…GFMP), 274–294 (EMTP…FFYL), and 326–346 (AILA…HAIV).

It belongs to the complex I subunit 2 family.

It is found in the mitochondrion inner membrane. It carries out the reaction a ubiquinone + NADH + 5 H(+)(in) = a ubiquinol + NAD(+) + 4 H(+)(out). Its function is as follows. Core subunit of the mitochondrial membrane respiratory chain NADH dehydrogenase (Complex I) that is believed to belong to the minimal assembly required for catalysis. Complex I functions in the transfer of electrons from NADH to the respiratory chain. The immediate electron acceptor for the enzyme is believed to be ubiquinone. The polypeptide is NADH-ubiquinone oxidoreductase chain 2 (MT-ND2) (Mareca penelope (Eurasian wigeon)).